Reading from the N-terminus, the 250-residue chain is Ubiquinone/menaquinone biosynthesis C-methyltransferase UbiE (250 aa).

S-adenosyl-L-methionine is bound by residues Thr-73, Asp-94, 122 to 123, and Ser-139; that span reads NS.

It belongs to the class I-like SAM-binding methyltransferase superfamily. MenG/UbiE family.

The enzyme catalyses a 2-demethylmenaquinol + S-adenosyl-L-methionine = a menaquinol + S-adenosyl-L-homocysteine + H(+). It catalyses the reaction a 2-methoxy-6-(all-trans-polyprenyl)benzene-1,4-diol + S-adenosyl-L-methionine = a 5-methoxy-2-methyl-3-(all-trans-polyprenyl)benzene-1,4-diol + S-adenosyl-L-homocysteine + H(+). Its pathway is quinol/quinone metabolism; menaquinone biosynthesis; menaquinol from 1,4-dihydroxy-2-naphthoate: step 2/2. It functions in the pathway cofactor biosynthesis; ubiquinone biosynthesis. Methyltransferase required for the conversion of demethylmenaquinol (DMKH2) to menaquinol (MKH2) and the conversion of 2-polyprenyl-6-methoxy-1,4-benzoquinol (DDMQH2) to 2-polyprenyl-3-methyl-6-methoxy-1,4-benzoquinol (DMQH2). The protein is Ubiquinone/menaquinone biosynthesis C-methyltransferase UbiE of Wigglesworthia glossinidia brevipalpis.